The chain runs to 200 residues: Ciliary neurotrophic factor (200 aa).

Belongs to the CNTF family. Nervous system.

The protein localises to the cytoplasm. Functionally, CNTF is a survival factor for various neuronal cell types. Seems to prevent the degeneration of motor axons after axotomy. The protein is Ciliary neurotrophic factor (Cntf) of Rattus norvegicus (Rat).